Reading from the N-terminus, the 381-residue chain is 4-hydroxy-3-methylbut-2-en-1-yl diphosphate synthase (flavodoxin) (381 aa).

C280, C283, C315, and E322 together coordinate [4Fe-4S] cluster.

The protein belongs to the IspG family. It depends on [4Fe-4S] cluster as a cofactor.

It carries out the reaction (2E)-4-hydroxy-3-methylbut-2-enyl diphosphate + oxidized [flavodoxin] + H2O + 2 H(+) = 2-C-methyl-D-erythritol 2,4-cyclic diphosphate + reduced [flavodoxin]. It functions in the pathway isoprenoid biosynthesis; isopentenyl diphosphate biosynthesis via DXP pathway; isopentenyl diphosphate from 1-deoxy-D-xylulose 5-phosphate: step 5/6. Converts 2C-methyl-D-erythritol 2,4-cyclodiphosphate (ME-2,4cPP) into 1-hydroxy-2-methyl-2-(E)-butenyl 4-diphosphate. This is 4-hydroxy-3-methylbut-2-en-1-yl diphosphate synthase (flavodoxin) from Clavibacter michiganensis subsp. michiganensis (strain NCPPB 382).